The following is a 220-amino-acid chain: Protein-L-isoaspartate O-methyltransferase (220 aa).

Residue S65 is part of the active site.

This sequence belongs to the methyltransferase superfamily. L-isoaspartyl/D-aspartyl protein methyltransferase family.

Its subcellular location is the cytoplasm. It catalyses the reaction [protein]-L-isoaspartate + S-adenosyl-L-methionine = [protein]-L-isoaspartate alpha-methyl ester + S-adenosyl-L-homocysteine. Functionally, catalyzes the methyl esterification of L-isoaspartyl residues in peptides and proteins that result from spontaneous decomposition of normal L-aspartyl and L-asparaginyl residues. It plays a role in the repair and/or degradation of damaged proteins. This is Protein-L-isoaspartate O-methyltransferase (pcm) from Pyrococcus horikoshii (strain ATCC 700860 / DSM 12428 / JCM 9974 / NBRC 100139 / OT-3).